The primary structure comprises 469 residues: Dynein axonemal assembly factor 11 (469 aa).

4 LRR repeats span residues Ile-20 to Cys-43, Arg-44 to Leu-65, Lys-66 to Ser-89, and Leu-90 to Gln-110. An LRRCT domain is found at His-114 to Val-135. Composition is skewed to basic and acidic residues over residues Lys-179–Tyr-213 and Ser-261–Lys-286. Disordered stretches follow at residues Lys-179 to Arg-290 and Lys-436 to Met-469.

Belongs to the tilB family.

Its subcellular location is the cytoplasm. The protein localises to the cell projection. The protein resides in the cilium. It is found in the dynein axonemal particle. It localises to the flagellum. Involved in dynein arm assembly, is important for expression and transporting outer dynein arm (ODA) proteins from the cytoplasm to the cilia. The polypeptide is Dynein axonemal assembly factor 11 (dnaaf11) (Xenopus laevis (African clawed frog)).